The sequence spans 331 residues: DNA-directed RNA polymerase subunit alpha (331 aa).

The alpha N-terminal domain (alpha-NTD) stretch occupies residues Met-1–Glu-223. Positions Pro-260–Asp-331 are alpha C-terminal domain (alpha-CTD).

It belongs to the RNA polymerase alpha chain family. In terms of assembly, homodimer. The RNAP catalytic core consists of 2 alpha, 1 beta, 1 beta' and 1 omega subunit. When a sigma factor is associated with the core the holoenzyme is formed, which can initiate transcription.

The catalysed reaction is RNA(n) + a ribonucleoside 5'-triphosphate = RNA(n+1) + diphosphate. In terms of biological role, DNA-dependent RNA polymerase catalyzes the transcription of DNA into RNA using the four ribonucleoside triphosphates as substrates. This chain is DNA-directed RNA polymerase subunit alpha, found in Deinococcus geothermalis (strain DSM 11300 / CIP 105573 / AG-3a).